A 445-amino-acid polypeptide reads, in one-letter code: C-terminal-binding protein 2 (445 aa).

Arg-22 carries the asymmetric dimethylarginine modification. NAD(+) is bound by residues Ser-106, 186–191, Asp-210, 243–249, 270–272, and Asp-296; these read IGFGRT, CNLNEHN, and AAR. Residue Arg-272 is part of the active site. Glu-301 is a catalytic residue. His-321 (proton donor) is an active-site residue. NAD(+) is bound at residue 321–324; the sequence is HTAW. The tract at residues 414 to 445 is disordered; sequence THNLPTVAHPSQAPSPNQPTKHGDNREHPNEQ. Ser-428 is modified (phosphoserine; by HIPK2). A compositionally biased stretch (basic and acidic residues) spans 434–445; the sequence is KHGDNREHPNEQ.

This sequence belongs to the D-isomer specific 2-hydroxyacid dehydrogenase family. In terms of assembly, interacts with HIPK2 and PNN. Interacts with the transcription factors ZNF217, BKLF, delta EF1/AREB6/ZEB, EVI-1 and Friend of GATA (FOG) via the consensus motif P-X-[DNS]-L-[STVA]. Also interacts with the C-terminus of adenovirus E1A protein. Can form a complex with BKLF on a CACCC-box oligonucleotide. Can form homodimers or heterodimers of CTBP1 and CTBP2. Interacts with NRIP1 and WIZ. Interacts with PRDM16; represses white adipose tissue (WAT)-specific genes expression. Interacts with MCRIP1. In terms of processing, phosphorylation by HIPK2 on Ser-428 induces proteasomal degradation. As to expression, found in all tissues except spleen and liver.

Its subcellular location is the nucleus. The protein resides in the synapse. Its function is as follows. Corepressor targeting diverse transcription regulators. Isoform 2 probably acts as a scaffold for specialized synapses. Functions in brown adipose tissue (BAT) differentiation. The protein is C-terminal-binding protein 2 (Ctbp2) of Mus musculus (Mouse).